Consider the following 304-residue polypeptide: Nod factor export ATP-binding protein I (304 aa).

Positions 6-236 constitute an ABC transporter domain; sequence IDLAGVKKSF…HIGCQVIEIF (231 aa). Residue 38-45 coordinates ATP; the sequence is GPNGAGKS.

The protein belongs to the ABC transporter superfamily. Lipooligosaccharide exporter (TC 3.A.1.102) family. The complex is composed of two ATP-binding proteins (NodI) and two transmembrane proteins (NodJ).

The protein resides in the cell inner membrane. Functionally, part of the ABC transporter complex NodIJ involved in the export of the nodulation factors (Nod factors), the bacterial signal molecules that induce symbiosis and subsequent nodulation induction. Nod factors are LCO (lipo-chitin oligosaccharide), a modified beta-1,4-linked N-acetylglucosamine oligosaccharide. This subunit is responsible for energy coupling to the transport system. The sequence is that of Nod factor export ATP-binding protein I from Rhizobium sp. (strain N33).